A 432-amino-acid chain; its full sequence is 3-phosphoshikimate 1-carboxyvinyltransferase (432 aa).

3 residues coordinate 3-phosphoshikimate: lysine 23, serine 24, and arginine 28. Lysine 23 provides a ligand contact to phosphoenolpyruvate. 2 residues coordinate phosphoenolpyruvate: glycine 95 and arginine 123. 4 residues coordinate 3-phosphoshikimate: serine 167, glutamine 169, aspartate 317, and lysine 344. Glutamine 169 serves as a coordination point for phosphoenolpyruvate. Catalysis depends on aspartate 317, which acts as the Proton acceptor. 2 residues coordinate phosphoenolpyruvate: arginine 348 and arginine 390.

Belongs to the EPSP synthase family. Monomer.

The protein localises to the cytoplasm. The enzyme catalyses 3-phosphoshikimate + phosphoenolpyruvate = 5-O-(1-carboxyvinyl)-3-phosphoshikimate + phosphate. It functions in the pathway metabolic intermediate biosynthesis; chorismate biosynthesis; chorismate from D-erythrose 4-phosphate and phosphoenolpyruvate: step 6/7. Its function is as follows. Catalyzes the transfer of the enolpyruvyl moiety of phosphoenolpyruvate (PEP) to the 5-hydroxyl of shikimate-3-phosphate (S3P) to produce enolpyruvyl shikimate-3-phosphate and inorganic phosphate. This is 3-phosphoshikimate 1-carboxyvinyltransferase from Staphylococcus saprophyticus subsp. saprophyticus (strain ATCC 15305 / DSM 20229 / NCIMB 8711 / NCTC 7292 / S-41).